The primary structure comprises 586 residues: Acetylcholinesterase (586 aa).

Positions 1 to 21 are cleaved as a signal peptide; sequence MNLLVTSSLGVLLHLVVLCQA. An N-linked (GlcNAc...) asparagine glycan is attached at N80. Cysteines 88 and 115 form a disulfide. S221 serves as the catalytic Acyl-ester intermediate. C275 and C286 are oxidised to a cystine. The active-site Charge relay system is the E348. Cysteines 423 and 542 form a disulfide. N437 is a glycosylation site (N-linked (GlcNAc...) asparagine). The active-site Charge relay system is the H461. N-linked (GlcNAc...) asparagine glycosylation is found at N478 and N554. Residue S564 is the site of GPI-anchor amidated serine attachment. A propeptide spans 565-586 (removed in mature form); sequence SGTSSSKGIIFYVLFSILYLIF.

Belongs to the type-B carboxylesterase/lipase family. Isoform H form is a homodimer; the asymmetric form is a disulfide-bonded oligomer composed of a collagenic subunit (Q) and a variable number of T catalytic subunits. In terms of processing, an interchain disulfide bond is present in what becomes position 593 of the T isoform. Found in the synapses and to a lower extent in extrajunctional areas of muscle and nerve, and on erythrocyte membranes.

The protein resides in the cell membrane. It is found in the synapse. The catalysed reaction is acetylcholine + H2O = choline + acetate + H(+). Its activity is regulated as follows. Inhibited by substrate concentrations above 0.5 mM. Its function is as follows. Terminates signal transduction at the neuromuscular junction by rapid hydrolysis of the acetylcholine released into the synaptic cleft. May be involved in cell-cell interactions. In Tetronarce californica (Pacific electric ray), this protein is Acetylcholinesterase (ache).